The chain runs to 196 residues: Histone H1.0 (196 aa).

2 disordered regions span residues 1-29 (MTEN…PKYS) and 78-196 (SGTL…GRKK). The region spanning 24–97 (DHPKYSDMIL…GASGSFRLAK (74 aa)) is the H15 domain. Positions 104–196 (PAKKPKKEIK…ASPKKSGRKK (93 aa)) are enriched in basic residues.

Belongs to the histone H1/H5 family.

Its subcellular location is the nucleus. The protein localises to the chromosome. Its function is as follows. Histones H1 are necessary for the condensation of nucleosome chains into higher-order structures. The histones H1.0 are found in cells that are in terminal stages of differentiation or that have low rates of cell division. The chain is Histone H1.0 (h1-0) from Xenopus tropicalis (Western clawed frog).